The primary structure comprises 1118 residues: cGMP-specific 3',5'-cyclic phosphodiesterase (1118 aa).

Positions 1–142 are disordered; it reads MTDVSSPAGG…KASTTASQQD (142 aa). Positions 18–33 are enriched in low complexity; it reads STTSSSSAATTSASSS. A compositionally biased stretch (polar residues) spans 34-45; it reads KPLTNGANKTAI. Low complexity-rich tracts occupy residues 46–56 and 63–72; these read STAAGGVTPGA and GAIPASSSSG. The segment covering 84–101 has biased composition (polar residues); it reads SNNNRPAVTNRSSETKLM. The span at 102 to 128 shows a compositional bias: low complexity; sequence TPTGSSSSPSQSPSQTQASIQTQTSQQ. GAF domains follow at residues 247-399 and 431-612; these read DIDV…GIGI and NLEC…GLGI. The 324-residue stretch at 642–965 folds into the PDEase domain; it reads SQDQTEKLTQ…RNWQDLAEKV (324 aa). Residue histidine 718 is the Proton donor of the active site. Residues histidine 722, histidine 758, aspartate 759, and aspartate 869 each coordinate a divalent metal cation. 2 disordered regions span residues 1006 to 1035 and 1065 to 1118; these read QQSQ…TGAL and SHVS…CALL. 2 stretches are compositionally biased toward basic and acidic residues: residues 1011–1022 and 1065–1075; these read GSEDSHTPEHQR and SHVSEDMDDKS. The segment covering 1084–1104 has biased composition (low complexity); it reads ASGSMGRMSASSSTSSAGGQM. The segment covering 1108–1118 has biased composition (basic residues); the sequence is SKKRSKLCALL. The residue at position 1115 (cysteine 1115) is a Cysteine methyl ester. Cysteine 1115 is lipidated: S-farnesyl cysteine. Positions 1116-1118 are cleaved as a propeptide — removed in mature form; the sequence is ALL.

The protein belongs to the cyclic nucleotide phosphodiesterase family. Interacts with PrBP. Requires a divalent metal cation as cofactor. As to expression, expressed in Malpighian tubule principal cells. Also expressed in adult head.

The protein resides in the cell membrane. The enzyme catalyses 3',5'-cyclic GMP + H2O = GMP + H(+). Inhibited by sildenafil and zaprinast. Hydrolyzes the second messenger cGMP, which is a key regulator of many important physiological processes. Has cAMP phosphodiesterase activity in vitro but not in vivo. Has a role regulating cGMP transport in Malpighian tubule principal cells. In Drosophila melanogaster (Fruit fly), this protein is cGMP-specific 3',5'-cyclic phosphodiesterase (Pde6).